A 575-amino-acid chain; its full sequence is Beta-amylase (575 aa).

Residues 1–36 form the signal peptide; that stretch reads MLHSQKRIWKKIGLCLLSFILGITVFTGSFGSKAEA. Residue D77 coordinates substrate. E84 and D88 together coordinate Ca(2+). The substrate site is built by H117 and D125. The cysteines at positions 119 and 127 are disulfide-linked. E171 is a binding site for Ca(2+). The Proton donor role is filled by E199. Residues K315, H320, and T358 each coordinate substrate. Catalysis depends on E395, which acts as the Proton acceptor. Substrate-binding positions include 396–397 and R424; that span reads NA.

It belongs to the glycosyl hydrolase 14 family. Monomer. Requires Ca(2+) as cofactor.

It catalyses the reaction Hydrolysis of (1-&gt;4)-alpha-D-glucosidic linkages in polysaccharides so as to remove successive maltose units from the non-reducing ends of the chains.. The protein is Beta-amylase of Niallia circulans (Bacillus circulans).